A 186-amino-acid polypeptide reads, in one-letter code: UPF0397 protein LBUL_1584 (186 aa).

5 helical membrane-spanning segments follow: residues 13 to 33 (IAAL…ASIP), 46 to 66 (AFLA…VGFI), 79 to 99 (TWWN…LYAL), 114 to 134 (VIFN…LGSV), and 150 to 170 (QAGL…TILL).

It belongs to the UPF0397 family.

The protein resides in the cell membrane. The polypeptide is UPF0397 protein LBUL_1584 (Lactobacillus delbrueckii subsp. bulgaricus (strain ATCC BAA-365 / Lb-18)).